Reading from the N-terminus, the 279-residue chain is Large ribosomal subunit protein uL2 (279 aa).

The interval valine 223 to arginine 279 is disordered. The segment covering arginine 270 to arginine 279 has biased composition (basic residues).

The protein belongs to the universal ribosomal protein uL2 family. In terms of assembly, part of the 50S ribosomal subunit. Forms a bridge to the 30S subunit in the 70S ribosome.

One of the primary rRNA binding proteins. Required for association of the 30S and 50S subunits to form the 70S ribosome, for tRNA binding and peptide bond formation. It has been suggested to have peptidyltransferase activity; this is somewhat controversial. Makes several contacts with the 16S rRNA in the 70S ribosome. The protein is Large ribosomal subunit protein uL2 of Rhodospirillum rubrum (strain ATCC 11170 / ATH 1.1.1 / DSM 467 / LMG 4362 / NCIMB 8255 / S1).